A 706-amino-acid chain; its full sequence is MLNPIVRKFQYGQHTVTLETGMMARQATAAVMVSMDDTAVFVTVVGAKNAKPGQSFFPLTVNYQERTYAAGRFPGGFFRREGRPSEGETLISRLIDRPIRPLFPEGFLNEVQVIATVVSVNPQVNPDIVAMIGASAALSLSGIPFSGPIGAARVGYLNDQYVLNPTTDELKESRLDLVVAGTEGAVLMVESEADLLSEDQMLGAVVFGHDQQQVVIENINALVAEAGKPKWDWHAPEVNVSLEQRVQALSEARLGDAYRITEKQERYAQVDVIKADVEAALLAEDETLNAGEIQEILGNVEKNVVRSRVLAGEPRIDGREKDMIRGLDVRTGVLPRTHGSALFTRGETQALVTATLGTERDAQTIDELTGERTDRFLLHYNFPPYSVGETGMVGSPKRREIGHGRLAKRGVLAVMPKASEFPYTVRVVSEITESNGSSSMASVCGASLALMDAGVPIKSAVAGIAMGLVKEGDNFVVLSDILGDEDHLGDMDFKVAGSREGITALQMDIKIEGITREIMQVALNQAKGARLHILGVMEQAISTPRGDISEFAPRIHTIKISTDKIKDVIGKGGSVIRALTEETGTTIEIEDDGTVKIASTDGEKAKHAIRRIEEITAEIEVGRVYQGKVTRIVDFGAFVAIGGGKEGLVHISQIADKRVEKVTDYLQMGQEVPVKVLEVDRQGRVRLSIKEATAPTQEAAAPSSEE.

Aspartate 486 and aspartate 492 together coordinate Mg(2+). The KH domain occupies 553 to 612 (PRIHTIKISTDKIKDVIGKGGSVIRALTEETGTTIEIEDDGTVKIASTDGEKAKHAIRRI). The 69-residue stretch at 622-690 (GRVYQGKVTR…RQGRVRLSIK (69 aa)) folds into the S1 motif domain.

This sequence belongs to the polyribonucleotide nucleotidyltransferase family. In terms of assembly, component of the RNA degradosome, which is a multiprotein complex involved in RNA processing and mRNA degradation. The cofactor is Mg(2+).

It is found in the cytoplasm. The enzyme catalyses RNA(n+1) + phosphate = RNA(n) + a ribonucleoside 5'-diphosphate. Involved in mRNA degradation. Catalyzes the phosphorolysis of single-stranded polyribonucleotides processively in the 3'- to 5'-direction. This chain is Polyribonucleotide nucleotidyltransferase, found in Pectobacterium carotovorum subsp. carotovorum (strain PC1).